Here is a 552-residue protein sequence, read N- to C-terminus: Glutamine--tRNA ligase (552 aa).

Positions 34–44 (PEPNGYLHIGH) match the 'HIGH' region motif. ATP is bound by residues 35–37 (EPN) and 41–47 (HIGHAKS). Residues aspartate 67 and tyrosine 212 each coordinate L-glutamine. ATP contacts are provided by residues threonine 231, 261–262 (RL), and 269–271 (MSK). The 'KMSKS' region motif lies at 268-272 (IMSKR).

This sequence belongs to the class-I aminoacyl-tRNA synthetase family. In terms of assembly, monomer.

The protein localises to the cytoplasm. The enzyme catalyses tRNA(Gln) + L-glutamine + ATP = L-glutaminyl-tRNA(Gln) + AMP + diphosphate. The protein is Glutamine--tRNA ligase of Aliivibrio salmonicida (strain LFI1238) (Vibrio salmonicida (strain LFI1238)).